We begin with the raw amino-acid sequence, 257 residues long: 4-diphosphocytidyl-2-C-methyl-D-erythritol kinase (257 aa).

K8 is an active-site residue. Position 91–101 (P91–A101) interacts with ATP. The active site involves D131.

It belongs to the GHMP kinase family. IspE subfamily.

The catalysed reaction is 4-CDP-2-C-methyl-D-erythritol + ATP = 4-CDP-2-C-methyl-D-erythritol 2-phosphate + ADP + H(+). The protein operates within isoprenoid biosynthesis; isopentenyl diphosphate biosynthesis via DXP pathway; isopentenyl diphosphate from 1-deoxy-D-xylulose 5-phosphate: step 3/6. Its function is as follows. Catalyzes the phosphorylation of the position 2 hydroxy group of 4-diphosphocytidyl-2C-methyl-D-erythritol. The sequence is that of 4-diphosphocytidyl-2-C-methyl-D-erythritol kinase from Petrotoga mobilis (strain DSM 10674 / SJ95).